A 316-amino-acid polypeptide reads, in one-letter code: 4-hydroxy-3-methylbut-2-enyl diphosphate reductase (316 aa).

Residue cysteine 12 coordinates [4Fe-4S] cluster. Residues histidine 41 and histidine 74 each coordinate (2E)-4-hydroxy-3-methylbut-2-enyl diphosphate. The dimethylallyl diphosphate site is built by histidine 41 and histidine 74. Isopentenyl diphosphate is bound by residues histidine 41 and histidine 74. Cysteine 96 serves as a coordination point for [4Fe-4S] cluster. Residue histidine 124 participates in (2E)-4-hydroxy-3-methylbut-2-enyl diphosphate binding. Histidine 124 is a binding site for dimethylallyl diphosphate. Residue histidine 124 participates in isopentenyl diphosphate binding. The Proton donor role is filled by glutamate 126. Threonine 169 lines the (2E)-4-hydroxy-3-methylbut-2-enyl diphosphate pocket. [4Fe-4S] cluster is bound at residue cysteine 199. Residues serine 227, serine 228, asparagine 229, and serine 271 each coordinate (2E)-4-hydroxy-3-methylbut-2-enyl diphosphate. Serine 227, serine 228, asparagine 229, and serine 271 together coordinate dimethylallyl diphosphate. Isopentenyl diphosphate-binding residues include serine 227, serine 228, asparagine 229, and serine 271.

The protein belongs to the IspH family. [4Fe-4S] cluster serves as cofactor.

The catalysed reaction is isopentenyl diphosphate + 2 oxidized [2Fe-2S]-[ferredoxin] + H2O = (2E)-4-hydroxy-3-methylbut-2-enyl diphosphate + 2 reduced [2Fe-2S]-[ferredoxin] + 2 H(+). The enzyme catalyses dimethylallyl diphosphate + 2 oxidized [2Fe-2S]-[ferredoxin] + H2O = (2E)-4-hydroxy-3-methylbut-2-enyl diphosphate + 2 reduced [2Fe-2S]-[ferredoxin] + 2 H(+). The protein operates within isoprenoid biosynthesis; dimethylallyl diphosphate biosynthesis; dimethylallyl diphosphate from (2E)-4-hydroxy-3-methylbutenyl diphosphate: step 1/1. It participates in isoprenoid biosynthesis; isopentenyl diphosphate biosynthesis via DXP pathway; isopentenyl diphosphate from 1-deoxy-D-xylulose 5-phosphate: step 6/6. Catalyzes the conversion of 1-hydroxy-2-methyl-2-(E)-butenyl 4-diphosphate (HMBPP) into a mixture of isopentenyl diphosphate (IPP) and dimethylallyl diphosphate (DMAPP). Acts in the terminal step of the DOXP/MEP pathway for isoprenoid precursor biosynthesis. This Vibrio vulnificus (strain CMCP6) protein is 4-hydroxy-3-methylbut-2-enyl diphosphate reductase.